Here is a 192-residue protein sequence, read N- to C-terminus: Thymidylate kinase (192 aa).

Residue 7–14 coordinates ATP; that stretch reads GIDCVGKS.

Belongs to the thymidylate kinase family.

The enzyme catalyses dTMP + ATP = dTDP + ADP. Phosphorylation of dTMP to form dTDP in both de novo and salvage pathways of dTTP synthesis. The protein is Thymidylate kinase of Campylobacter jejuni subsp. jejuni serotype O:23/36 (strain 81-176).